A 166-amino-acid polypeptide reads, in one-letter code: MPEDNLSGDGGPPVDIDISVEAGDWPDEAGLARLVDRAVDAAFAETGVTGRSELSVVFSDDAHIRTLNAEWRGKDKPTNVLSFPAFPFAQGGPLPPMLGDIVLAAETVSREAALEDKPVQNHITHLVIHGLLHLLGHDHETDAEAEAMEAIERAALARLAIPDPYA.

Zn(2+) is bound by residues H129, H133, and H139.

Belongs to the endoribonuclease YbeY family. It depends on Zn(2+) as a cofactor.

The protein localises to the cytoplasm. In terms of biological role, single strand-specific metallo-endoribonuclease involved in late-stage 70S ribosome quality control and in maturation of the 3' terminus of the 16S rRNA. This chain is Endoribonuclease YbeY, found in Mesorhizobium japonicum (strain LMG 29417 / CECT 9101 / MAFF 303099) (Mesorhizobium loti (strain MAFF 303099)).